We begin with the raw amino-acid sequence, 353 residues long: Rhodopsin (353 aa).

The Extracellular segment spans residues 1-36; sequence MNGTEGPFFYVPMLNTTGIVRSPYDYPQYYLVNPAA. N-linked (GlcNAc...) asparagine glycosylation is found at Asn-2 and Asn-15. Residues 37–61 traverse the membrane as a helical segment; the sequence is YAALGAYMFLLILLGFPINFLTLYV. Residues 62–73 lie on the Cytoplasmic side of the membrane; the sequence is TIEHKKLRTPLN. Residues 74 to 96 form a helical membrane-spanning segment; that stretch reads YILLNLAVANLFMVFGGFTTTMY. Residues 97-110 lie on the Extracellular side of the membrane; that stretch reads TSMHGYFVLGRLGC. The cysteines at positions 110 and 187 are disulfide-linked. Residues 111 to 133 traverse the membrane as a helical segment; that stretch reads NLEGFFATLGGEIGLWSLVVLAI. Residues 134–136 carry the 'Ionic lock' involved in activated form stabilization motif; that stretch reads ERW. Residues 134–152 lie on the Cytoplasmic side of the membrane; sequence ERWMVVCKPISNFRFGENH. A helical transmembrane segment spans residues 153-173; that stretch reads AIMGLAFTWIMACACAVPPLV. At 174–202 the chain is on the extracellular side; that stretch reads GWSRYIPEGMQCSCGVDYYTRAEGFNNES. Asn-200 carries N-linked (GlcNAc...) asparagine glycosylation. A helical transmembrane segment spans residues 203–224; sequence FVVYMFICHFLIPMAVVFFCYG. The Cytoplasmic portion of the chain corresponds to 225-252; that stretch reads RLLCAVKEAAAAQQESETTQRAEREVTR. Residues 253-274 traverse the membrane as a helical segment; it reads MVVIMVVAFLICWLPYAGVAWW. The Extracellular segment spans residues 275 to 286; sequence IFTHQGSEFGPV. Residues 287–308 form a helical membrane-spanning segment; that stretch reads FMTIPAFFAKSSSIYNPLIYIC. Lys-296 bears the N6-(retinylidene)lysine mark. Residues 309–353 lie on the Cytoplasmic side of the membrane; that stretch reads MNKQFRHCMITTLCCGKNPFEEEEGASTTSKTEASSVSSSSVSPA. 2 S-palmitoyl cysteine lipidation sites follow: Cys-322 and Cys-323. The disordered stretch occupies residues 330-353; that stretch reads EEEGASTTSKTEASSVSSSSVSPA. The segment covering 334 to 353 has biased composition (low complexity); the sequence is ASTTSKTEASSVSSSSVSPA.

Belongs to the G-protein coupled receptor 1 family. Opsin subfamily. Phosphorylated on some or all of the serine and threonine residues present in the C-terminal region. In terms of processing, contains one covalently linked retinal chromophore.

Its subcellular location is the membrane. The protein localises to the cell projection. It localises to the cilium. The protein resides in the photoreceptor outer segment. Photoreceptor required for image-forming vision at low light intensity. While most salt water fish species use retinal as chromophore, most freshwater fish use 3-dehydroretinal, or a mixture of retinal and 3-dehydroretinal. Light-induced isomerization of 11-cis to all-trans retinal triggers a conformational change that activates signaling via G-proteins. Subsequent receptor phosphorylation mediates displacement of the bound G-protein alpha subunit by arrestin and terminates signaling. In Tetraodon nigroviridis (Spotted green pufferfish), this protein is Rhodopsin (rho).